Reading from the N-terminus, the 406-residue chain is DNA repair protein RAD55 (406 aa).

Residue 43-50 (GPPGIGKT) coordinates ATP. Residues 385–406 (DSNDNPLPNAEGKEEIIYDSEG) are disordered.

The protein belongs to the RecA family. RAD55 subfamily.

The protein resides in the nucleus. In terms of biological role, required for radiation resistance and meiotic viability and presumably acts in recombination and recombinational DNA repair pathways. The polypeptide is DNA repair protein RAD55 (RAD55) (Saccharomyces cerevisiae (strain ATCC 204508 / S288c) (Baker's yeast)).